A 154-amino-acid chain; its full sequence is MGSDKKTPEEKRKHKRSSPSSPLDEVKSKRQNIKGDEERRKEKKDKSKKEKHKSHSSEEKKSGEKHKTKSHKHKDKSKNKFEELSKDDYFSKNNEFATWLKDKKNLFFSDLSSETARDLFSDFVIQWNKGKLDSQYYEGIATGPRSSHAWNIKK.

Basic and acidic residues-rich tracts occupy residues 1-11 and 24-48; these read MGSDKKTPEEK and DEVK…DKSK. Residues 1 to 84 are disordered; sequence MGSDKKTPEE…DKSKNKFEEL (84 aa). Basic residues predominate over residues 63–77; it reads GEKHKTKSHKHKDKS.

In terms of tissue distribution, specifically expressed in flowers pistils, especially in stigmas and styles. Barely detected in roots, stems, leaves, sepals, petals and stamen.

The protein resides in the nucleus. Functionally, component of the auxin signaling transduction pathway that regulates cell proliferation and differentiation during flowers stigmas and styles development. Involved in the regulation of auxin-related genes. In Nicotiana tabacum (Common tobacco), this protein is Style cell-cycle inhibitor 1-A.